The chain runs to 185 residues: MIEETLLEAGDKMDKAVEVAKEDFASIRTGRATPGLYNRVLVDYYGSPTPLQQLASFAVPDARTILITPFDKTALRDIERALSDSEVGANPSNDGNVIRITIPELTKERRKEYVKIVKAKGEDAKVSIRNIRRKAKETLDKLVKDGEAGEDEGARGEKELDALTKAHVDGIDDLLKRKEAELLEV.

Belongs to the RRF family.

It localises to the cytoplasm. Its function is as follows. Responsible for the release of ribosomes from messenger RNA at the termination of protein biosynthesis. May increase the efficiency of translation by recycling ribosomes from one round of translation to another. This Arthrobacter sp. (strain FB24) protein is Ribosome-recycling factor.